Consider the following 113-residue polypeptide: Putative membrane protein insertion efficiency factor (113 aa).

Belongs to the UPF0161 family.

The protein resides in the cell inner membrane. In terms of biological role, could be involved in insertion of integral membrane proteins into the membrane. The sequence is that of Putative membrane protein insertion efficiency factor from Campylobacter jejuni subsp. jejuni serotype O:23/36 (strain 81-176).